A 433-amino-acid chain; its full sequence is Glutamate-1-semialdehyde 2,1-aminomutase (433 aa).

Lys-266 carries the post-translational modification N6-(pyridoxal phosphate)lysine.

This sequence belongs to the class-III pyridoxal-phosphate-dependent aminotransferase family. HemL subfamily. As to quaternary structure, homodimer. Pyridoxal 5'-phosphate is required as a cofactor.

It is found in the cytoplasm. It catalyses the reaction (S)-4-amino-5-oxopentanoate = 5-aminolevulinate. It functions in the pathway porphyrin-containing compound metabolism; protoporphyrin-IX biosynthesis; 5-aminolevulinate from L-glutamyl-tRNA(Glu): step 2/2. The protein is Glutamate-1-semialdehyde 2,1-aminomutase of Psychrobacter cryohalolentis (strain ATCC BAA-1226 / DSM 17306 / VKM B-2378 / K5).